A 136-amino-acid chain; its full sequence is Histone H2B (136 aa).

Over residues 1–10 (MPPKAADKKP) the composition is skewed to basic and acidic residues. Positions 1-44 (MPPKAADKKPAAKAPVASKAPEKKDAGKKTASTGEKKKRTKARR) are disordered. N6-acetyllysine; alternate occurs at positions 8 and 9. Residues Lys8 and Lys9 each participate in a glycyl lysine isopeptide (Lys-Gly) (interchain with G-Cter in SUMO); alternate cross-link. Lys13 carries the post-translational modification N6-acetyllysine. Lys23 is modified (N6-acetyllysine; alternate). Lys23 participates in a covalent cross-link: Glycyl lysine isopeptide (Lys-Gly) (interchain with G-Cter in SUMO); alternate. Lys24 is covalently cross-linked (Glycyl lysine isopeptide (Lys-Gly) (interchain with G-Cter in SUMO)). Lys130 participates in a covalent cross-link: Glycyl lysine isopeptide (Lys-Gly) (interchain with G-Cter in ubiquitin).

Belongs to the histone H2B family. The nucleosome is a histone octamer containing two molecules each of H2A, H2B, H3 and H4 assembled in one H3-H4 heterotetramer and two H2A-H2B heterodimers. The octamer wraps approximately 147 bp of DNA. Monoubiquitinated to form H2BK123ub1. H2BK123ub1 gives a specific tag for epigenetic transcriptional activation and is also prerequisite for H3K4me and H3K79me formation. H2BK123ub1 also modulates the formation of double-strand breaks during meiosis and is a prerequisite for DNA-damage checkpoint activation. Post-translationally, acetylated by GCN5 to form H2BK11ac and H2BK16ac. H2BK16ac can also be formed by ESA1. Acetylation of N-terminal lysines and particularly formation of H2BK11acK16ac has a positive effect on transcription. In terms of processing, sumoylation to form H2BK6su or H2BK7su, and probably also H2BK16su or H2BK17su, occurs preferentially near the telomeres and represses gene transcription.

Its subcellular location is the nucleus. It is found in the chromosome. Its function is as follows. Core component of nucleosome. Nucleosomes wrap and compact DNA into chromatin, limiting DNA accessibility to the cellular machineries which require DNA as a template. Histones thereby play a central role in transcription regulation, DNA repair, DNA replication and chromosomal stability. DNA accessibility is regulated via a complex set of post-translational modifications of histones, also called histone code, and nucleosome remodeling. This chain is Histone H2B (hh2b), found in Rosellinia necatrix (White root-rot fungus).